We begin with the raw amino-acid sequence, 651 residues long: MBT domain-containing protein 1 (651 aa).

The segment at 21–55 (SFGMFDGYDSCSEDTSSSSSSDESEEEVAPLPSSL) is disordered. Low complexity predominate over residues 29 to 41 (DSCSEDTSSSSSS). The FCS-type zinc-finger motif lies at 68-103 (PDGKSGMATCEMCGMVGVRDAFYSKTKRFCSVSCSR). Residues C77, C80, C97, and C101 each contribute to the Zn(2+) site. MBT repeat units follow at residues 164-268 (FSWG…LVPP), 276-373 (TNWK…IGHR), 374-479 (FKRT…LTPP), and 487-583 (FKWF…LQPP). 2 disordered regions span residues 581 to 610 (QPPAPQSNKDSQSNISKQKKKSKSQPYKGH) and 629 to 651 (TFLQGASDQESNGSGSYYIKQEP). The segment covering 586-596 (QSNKDSQSNIS) has biased composition (low complexity). A compositionally biased stretch (basic residues) spans 597 to 610 (KQKKKSKSQPYKGH). Polar residues predominate over residues 632-643 (QGASDQESNGSG).

Monomer. Component of the NuA4 histone acetyltransferase complex.

The protein localises to the nucleus. Its subcellular location is the chromosome. In terms of biological role, chromatin reader component of the NuA4 histone acetyltransferase complex, a multiprotein complex involved in transcriptional activation of select genes principally by acetylation of nucleosomal histones H4 and H2A. The NuA4 complex plays a direct role in repair of DNA double-strand breaks (DSBs) by promoting homologous recombination (HR). MBTD1 specifically recognizes and binds monomethylated and dimethylated 'Lys-20' on histone H4 (H4K20me1 and H4K20me2, respectively). In the NuA4 complex, MBTD1 promotes recruitment of the complex to H4K20me marks by competing with TP53BP1 for binding to H4K20me. Following recruitment to H4K20me at DNA breaks, the NuA4 complex catalyzes acetylation of 'Lys-15' on histone H2A (H2AK15), blocking the ubiquitination mark required for TP53BP1 localization at DNA breaks, thereby promoting homologous recombination (HR). This Xenopus tropicalis (Western clawed frog) protein is MBT domain-containing protein 1.